A 236-amino-acid polypeptide reads, in one-letter code: Biosynthetic peptidoglycan transglycosylase (236 aa).

The helical transmembrane segment at glycine 20 to proline 40 threads the bilayer.

Belongs to the glycosyltransferase 51 family.

It localises to the cell inner membrane. The enzyme catalyses [GlcNAc-(1-&gt;4)-Mur2Ac(oyl-L-Ala-gamma-D-Glu-L-Lys-D-Ala-D-Ala)](n)-di-trans,octa-cis-undecaprenyl diphosphate + beta-D-GlcNAc-(1-&gt;4)-Mur2Ac(oyl-L-Ala-gamma-D-Glu-L-Lys-D-Ala-D-Ala)-di-trans,octa-cis-undecaprenyl diphosphate = [GlcNAc-(1-&gt;4)-Mur2Ac(oyl-L-Ala-gamma-D-Glu-L-Lys-D-Ala-D-Ala)](n+1)-di-trans,octa-cis-undecaprenyl diphosphate + di-trans,octa-cis-undecaprenyl diphosphate + H(+). It participates in cell wall biogenesis; peptidoglycan biosynthesis. Functionally, peptidoglycan polymerase that catalyzes glycan chain elongation from lipid-linked precursors. This Mesorhizobium japonicum (strain LMG 29417 / CECT 9101 / MAFF 303099) (Mesorhizobium loti (strain MAFF 303099)) protein is Biosynthetic peptidoglycan transglycosylase.